Consider the following 401-residue polypeptide: Probable tRNA sulfurtransferase (401 aa).

A THUMP domain is found at 63–168 (TTAEQALSCL…EREAFLYGAR (106 aa)). ATP contacts are provided by residues 186-187 (LL), 211-212 (YF), Arg268, Gly290, and Gln299.

The protein belongs to the ThiI family.

The protein resides in the cytoplasm. It carries out the reaction [ThiI sulfur-carrier protein]-S-sulfanyl-L-cysteine + a uridine in tRNA + 2 reduced [2Fe-2S]-[ferredoxin] + ATP + H(+) = [ThiI sulfur-carrier protein]-L-cysteine + a 4-thiouridine in tRNA + 2 oxidized [2Fe-2S]-[ferredoxin] + AMP + diphosphate. The enzyme catalyses [ThiS sulfur-carrier protein]-C-terminal Gly-Gly-AMP + S-sulfanyl-L-cysteinyl-[cysteine desulfurase] + AH2 = [ThiS sulfur-carrier protein]-C-terminal-Gly-aminoethanethioate + L-cysteinyl-[cysteine desulfurase] + A + AMP + 2 H(+). Its pathway is cofactor biosynthesis; thiamine diphosphate biosynthesis. In terms of biological role, catalyzes the ATP-dependent transfer of a sulfur to tRNA to produce 4-thiouridine in position 8 of tRNAs, which functions as a near-UV photosensor. Also catalyzes the transfer of sulfur to the sulfur carrier protein ThiS, forming ThiS-thiocarboxylate. This is a step in the synthesis of thiazole, in the thiamine biosynthesis pathway. The sulfur is donated as persulfide by IscS. In Treponema pallidum subsp. pallidum (strain SS14), this protein is Probable tRNA sulfurtransferase.